The following is a 77-amino-acid chain: Conotoxin Cl6.12 (77 aa).

An N-terminal signal peptide occupies residues 1–20 (MKFYLLLTAALLLTAVIIEA). Residues 21–36 (APTDHQDEARDLMREE) constitute a propeptide that is removed on maturation. 3 cysteine pairs are disulfide-bonded: Cys-43-Cys-58, Cys-51-Cys-62, and Cys-57-Cys-68.

Expressed by the venom duct.

The protein resides in the secreted. This is Conotoxin Cl6.12 from Californiconus californicus (California cone).